Consider the following 426-residue polypeptide: Squamosa promoter-binding-like protein 10 (426 aa).

The SBP-type zinc finger occupies 178 to 255 (PPRCQAEGCK…AEHNRRRRKP (78 aa)). 8 residues coordinate Zn(2+): Cys181, Cys186, Cys203, His206, Cys222, Cys225, His229, and Cys241. A Bipartite nuclear localization signal motif is present at residues 238–254 (KRSCRKRLAEHNRRRRK). Composition is skewed to low complexity over residues 268 to 287 (DAAA…AATS) and 401 to 417 (SDQN…NNNN). 2 disordered regions span residues 268-290 (DAAA…SYTG) and 392-426 (PSTA…VDFM).

As to expression, expressed in stems, leaf sheaths, and young panicles.

It localises to the nucleus. Its function is as follows. Trans-acting factor that binds specifically to the consensus nucleotide sequence 5'-TNCGTACAA-3'. This chain is Squamosa promoter-binding-like protein 10 (SPL10), found in Oryza sativa subsp. indica (Rice).